The chain runs to 690 residues: Quinohemoprotein alcohol dehydrogenase ADH IIB (690 aa).

Positions 1–22 (MKKPLRTSLLMLCLATPLAALA) are cleaved as a signal peptide. Glutamate 81 is a binding site for pyrroloquinoline quinone. Cysteines 127 and 128 form a disulfide. Pyrroloquinoline quinone is bound by residues arginine 133, threonine 177, and 193 to 194 (GA). Residue glutamate 195 participates in Ca(2+) binding. Threonine 252 lines the pyrroloquinoline quinone pocket. The Ca(2+) site is built by asparagine 272 and aspartate 317. Residue aspartate 317 is the Proton acceptor of the active site. Pyrroloquinoline quinone-binding positions include lysine 344, 404-405 (NW), and valine 547. One can recognise a Cytochrome c domain in the interval 600–678 (EQVQAGKQLY…QIKLYVMSRE (79 aa)). Heme c is bound by residues cysteine 613, cysteine 616, histidine 617, and methionine 655.

Belongs to the bacterial PQQ dehydrogenase family. In terms of assembly, monomer. Pyrroloquinoline quinone is required as a cofactor. Requires Ca(2+) as cofactor. The cofactor is heme c.

The protein resides in the periplasm. The enzyme catalyses 2 oxidized [azurin] + a primary alcohol = 2 reduced [azurin] + an aldehyde + 2 H(+). Its activity is regulated as follows. Inhibited by 10 mM 1-butanol. Functionally, catalyzes the dye-linked oxidation of primary alcohols to the corresponding aldehydes and the (subsequent) oxidation of the aldehydes to carboxylic acids. Exhibits activity with longer mono-alcohols (C-4 to C-7) but not with methanol or glycerol. Reacts with 1,2-propanediol and 1,3-propanediol but not with sugar alcohols such as D-sorbitol. The sequence is that of Quinohemoprotein alcohol dehydrogenase ADH IIB from Pseudomonas putida (Arthrobacter siderocapsulatus).